The sequence spans 322 residues: tRNA (guanine-N(7)-)-methyltransferase (322 aa).

3 residues coordinate S-adenosyl-L-methionine: E29, E55, and D105. D105 is a catalytic residue. K109 and D141 together coordinate substrate.

It belongs to the class I-like SAM-binding methyltransferase superfamily. TrmB family.

It carries out the reaction guanosine(46) in tRNA + S-adenosyl-L-methionine = N(7)-methylguanosine(46) in tRNA + S-adenosyl-L-homocysteine. The protein operates within tRNA modification; N(7)-methylguanine-tRNA biosynthesis. Catalyzes the formation of N(7)-methylguanine at position 46 (m7G46) in tRNA. This is tRNA (guanine-N(7)-)-methyltransferase from Deinococcus radiodurans (strain ATCC 13939 / DSM 20539 / JCM 16871 / CCUG 27074 / LMG 4051 / NBRC 15346 / NCIMB 9279 / VKM B-1422 / R1).